A 304-amino-acid polypeptide reads, in one-letter code: Choline-phosphate cytidylyltransferase 2 (304 aa).

CTP-binding positions include 28–36 (IFDLFHFGH) and lysine 66. 2 residues coordinate substrate: lysine 66 and tryptophan 95. CTP contacts are provided by residues 112-113 (HD), tyrosine 117, and 142-146 (RTEGI). The segment at 266 to 292 (QNGLTISKDNDDEQMSDDNEFAEEDCV) is disordered. Residues 275–291 (NDDEQMSDDNEFAEEDC) show a composition bias toward acidic residues.

The protein belongs to the cytidylyltransferase family.

The catalysed reaction is phosphocholine + CTP + H(+) = CDP-choline + diphosphate. It participates in phospholipid metabolism; phosphatidylcholine biosynthesis; phosphatidylcholine from phosphocholine: step 1/2. Functionally, plays an important role in the biosynthesis of the phospholipid phosphatidylcholine. Catalyzes the formation of CDP-choline. This chain is Choline-phosphate cytidylyltransferase 2, found in Arabidopsis thaliana (Mouse-ear cress).